The primary structure comprises 469 residues: Origin recognition complex subunit 6 (469 aa).

2 stretches are compositionally biased toward low complexity: residues 218–234 (SSTLNNTTTSTTTTAPK) and 275–308 (ATPTLSSSSSSSSSSSSSLSPPLSSNPTTDLSST). Disordered regions lie at residues 218-241 (SSTLNNTTTSTTTTAPKSPIPIPS), 275-309 (ATPTLSSSSSSSSSSSSSLSPPLSSNPTTDLSSTN), 356-423 (ESPF…EGDL), and 436-469 (KEQQFNDWKNSDFAKSKPTPVNATKQLTLDSFFK). 2 stretches are compositionally biased toward basic and acidic residues: residues 380-390 (SRDELEKESEL) and 409-423 (QKEKSVKNKINEGDL). Polar residues predominate over residues 454-469 (TPVNATKQLTLDSFFK).

Belongs to the ORC6 family. ORC is composed of six subunits.

The protein resides in the nucleus. Component of the origin recognition complex (ORC) that binds origins of replication. DNA-binding is ATP-dependent, however specific DNA sequences that define origins of replication have not been identified so far. ORC is required to assemble the pre-replication complex necessary to initiate DNA replication. The polypeptide is Origin recognition complex subunit 6 (orcF) (Dictyostelium discoideum (Social amoeba)).